The primary structure comprises 379 residues: MPVPPTLSLDAFAAAKLAGLDAAGLRRRLVPTARTGGARAERDGRAVVSFSCNDYLGLATHPEVVAAAHAALDRYGAGSGGSRLVTGSHPILAELEAALAARKGHEAALVFGSGYLANLGVTPALVGAGDLILIDELGHSCMWAGTRLAGARALPFRHNDLGHLEDLLARERARARRALILTERVFSMDGDRAPVAEILGLARAFDAWTLVDDAHGLGVVGPDATAPLEMGTLSKALGSYGGYLCASRPVIDLLTSRARSFVYTTGLPPASAAAALAALRLIEAEPARAARPLALARRFTARLGLPEAQSAVVPVLVGEAEAALALSRALEARGFLVVAIRPPTVPPGTARLRVAFSAAHEEAEVDALAQALLDLGAAA.

Substrate is bound by residues R27 and R34. 114–115 (GY) lines the pyridoxal 5'-phosphate pocket. H139 contributes to the substrate binding site. Pyridoxal 5'-phosphate-binding positions include S187, 212 to 215 (DDAH), and 232 to 235 (TLSK). K235 bears the N6-(pyridoxal phosphate)lysine mark. T344 contributes to the substrate binding site.

Belongs to the class-II pyridoxal-phosphate-dependent aminotransferase family. BioF subfamily. As to quaternary structure, homodimer. Pyridoxal 5'-phosphate serves as cofactor.

The enzyme catalyses 6-carboxyhexanoyl-[ACP] + L-alanine + H(+) = (8S)-8-amino-7-oxononanoate + holo-[ACP] + CO2. It functions in the pathway cofactor biosynthesis; biotin biosynthesis. Functionally, catalyzes the decarboxylative condensation of pimeloyl-[acyl-carrier protein] and L-alanine to produce 8-amino-7-oxononanoate (AON), [acyl-carrier protein], and carbon dioxide. In Methylobacterium sp. (strain 4-46), this protein is 8-amino-7-oxononanoate synthase.